A 331-amino-acid polypeptide reads, in one-letter code: Ferredoxin--NADP reductase (331 aa).

FAD-binding residues include E34, Q42, Y47, V87, F121, D285, and T325.

This sequence belongs to the ferredoxin--NADP reductase type 2 family. As to quaternary structure, homodimer. Requires FAD as cofactor.

It catalyses the reaction 2 reduced [2Fe-2S]-[ferredoxin] + NADP(+) + H(+) = 2 oxidized [2Fe-2S]-[ferredoxin] + NADPH. In Lactiplantibacillus plantarum (strain ATCC BAA-793 / NCIMB 8826 / WCFS1) (Lactobacillus plantarum), this protein is Ferredoxin--NADP reductase.